The sequence spans 66 residues: Neurotoxin-like protein STR1 (66 aa).

An LCN-type CS-alpha/beta domain is found at 2 to 65 (RDGYIVHDGT…VWGEDGFMCW (64 aa)). Cystine bridges form between Cys-13–Cys-64, Cys-17–Cys-40, Cys-26–Cys-45, and Cys-30–Cys-47.

It belongs to the long (4 C-C) scorpion toxin superfamily. Sodium channel inhibitor family. Beta subfamily. In terms of tissue distribution, expressed by the venom gland.

It localises to the secreted. In terms of biological role, this protein is not toxic. The polypeptide is Neurotoxin-like protein STR1 (Androctonus australis (Sahara scorpion)).